Consider the following 700-residue polypeptide: Lutropin-choriogonadotropic hormone receptor (700 aa).

A signal peptide spans 1-26 (MGRRVPALRQLLVLAMLVLKQSQLHS). Residues 27 to 362 (PELSGSRCPE…AFNPCEDIMG (336 aa)) are Extracellular-facing. The LRR 1 repeat unit spans residues 52-75 (RAGLARLSLTYLPVKVIPSQAFRG). A glycan (N-linked (GlcNAc...) asparagine) is linked at Asn-103. LRR repeat units follow at residues 126 to 150 (LPRL…KISS), 176 to 200 (MNNE…AFNG), and 225 to 248 (ATGP…GLES). Residues Asn-178 and Asn-199 are each glycosylated (N-linked (GlcNAc...) asparagine). Residues Asn-295, Asn-303, and Asn-317 are each glycosylated (N-linked (GlcNAc...) asparagine). Tyr-335 is subject to Sulfotyrosine. Residues 363-390 (YAFLRVLIWLINILAIFGNLTVLFVLLT) traverse the membrane as a helical segment. Over 391-399 (SRYKLTVPR) the chain is Cytoplasmic. A helical transmembrane segment spans residues 400–422 (FLMCNLSFADFCMGLYLLLIASV). Residues 423–443 (DSQTKGQYYNHAIDWQTGSGC) lie on the Extracellular side of the membrane. An intrachain disulfide couples Cys-443 to Cys-518. The helical transmembrane segment at 444–466 (SAAGFFTVFASELSVYTLTVITL) threads the bilayer. Residues 467–486 (ERWHTITYAVQLDQKLRLRH) are Cytoplasmic-facing. Residues 487–509 (AIPIMLGGWIFSTLMATLPLVGV) form a helical membrane-spanning segment. Residues 510–529 (SSYMKVSICLPMDVESTLSQ) are Extracellular-facing. A helical membrane pass occupies residues 530–551 (VYILSILLLNAVAFVVICACYV). At 552–574 (RIYFAVQNPELTAPNKDTKIAKK) the chain is on the cytoplasmic side. The helical transmembrane segment at 575 to 598 (MAILIFTDFTCMAPISFFAISAAF) threads the bilayer. At 599–609 (KVPLITVTNSK) the chain is on the extracellular side. A helical membrane pass occupies residues 610–631 (VLLVLFYPVNSCANPFLYAVFT). Over 632–700 (KAFQRDFFLL…QPTPPRVLIQ (69 aa)) the chain is Cytoplasmic. 2 S-palmitoyl cysteine lipidation sites follow: Cys-647 and Cys-648.

Belongs to the G-protein coupled receptor 1 family. FSH/LSH/TSH subfamily. Post-translationally, sulfated.

The protein resides in the cell membrane. Functionally, receptor for lutropin-choriogonadotropic hormone. The activity of this receptor is mediated by G proteins which activate adenylate cyclase. The sequence is that of Lutropin-choriogonadotropic hormone receptor (Lhcgr) from Mus musculus (Mouse).